Consider the following 22-residue polypeptide: Antimicrobial peptide 5 (22 aa).

Leu-22 is modified (leucine amide).

As to expression, skin.

The protein localises to the secreted. Its function is as follows. Has very strong antimicrobial activity against Gram-positive bacterium S.aureus, Gram-negative bacterium E.coli and yeast C.albicans. Has strong hemolytic activity against human red blood cells. The sequence is that of Antimicrobial peptide 5 from Xenopus tropicalis (Western clawed frog).